Reading from the N-terminus, the 241-residue chain is Large ribosomal subunit protein uL30 (241 aa).

A disordered region spans residues 1 to 32; the sequence is MATTLKPETLQKKEKAQQKTAEERAAAKKVRK. The span at 9–26 shows a compositional bias: basic and acidic residues; the sequence is TLQKKEKAQQKTAEERAA.

This sequence belongs to the universal ribosomal protein uL30 family. Component of the large ribosomal subunit. Mature ribosomes consist of a small (40S) and a large (60S) subunit. The 40S subunit contains about 32 different proteins and 1 molecule of RNA (18S). The 60S subunit contains 45 different proteins and 3 molecules of RNA (25S, 5.8S and 5S).

The protein resides in the cytoplasm. Functionally, component of the ribosome, a large ribonucleoprotein complex responsible for the synthesis of proteins in the cell. The small ribosomal subunit (SSU) binds messenger RNAs (mRNAs) and translates the encoded message by selecting cognate aminoacyl-transfer RNA (tRNA) molecules. The large subunit (LSU) contains the ribosomal catalytic site termed the peptidyl transferase center (PTC), which catalyzes the formation of peptide bonds, thereby polymerizing the amino acids delivered by tRNAs into a polypeptide chain. The nascent polypeptides leave the ribosome through a tunnel in the LSU and interact with protein factors that function in enzymatic processing, targeting, and the membrane insertion of nascent chains at the exit of the ribosomal tunnel. In Candida albicans (strain SC5314 / ATCC MYA-2876) (Yeast), this protein is Large ribosomal subunit protein uL30.